The primary structure comprises 546 residues: Protein phosphatase 1G (546 aa).

A lipid anchor (N-myristoyl glycine) is attached at Gly-2. Arg-22 is subject to Omega-N-methylarginine. Residues 26–505 enclose the PPM-type phosphatase domain; it reads PYGFSAMQGW…DNMTCIIICF (480 aa). Mn(2+)-binding residues include Asp-60 and Gly-61. Disordered regions lie at residues 116–139 and 161–328; these read QIAGRPTEDEDEKEKVADEDDVDN and GQNC…SDSG. Thr-122 carries the phosphothreonine modification. Positions 123-139 are enriched in acidic residues; that stretch reads EDEDEKEKVADEDDVDN. The residue at position 183 (Ser-183) is a Phosphoserine. Positions 259–312 are enriched in acidic residues; the sequence is DSEDESDEAEEEEEDSEECSEEEDGYSSEEAENEEDEDDTEEAEEDDEEEEEEM. Position 383 is an N6-acetyllysine (Lys-383). Asp-441 and Asp-496 together coordinate Mn(2+). The segment at 512 to 546 is disordered; that stretch reads ELQPESGKRKLEEVLSTEGAEENGNSDKKKKAKRD. Ser-527 carries the phosphoserine modification.

It belongs to the PP2C family. Interacts with NOL3; may dephosphorylate NOL3. Requires Mg(2+) as cofactor. It depends on Mn(2+) as a cofactor. Widely expressed. Most abundant in testis, skeletal muscle, and heart.

It localises to the cytoplasm. It is found in the membrane. The catalysed reaction is O-phospho-L-seryl-[protein] + H2O = L-seryl-[protein] + phosphate. It carries out the reaction O-phospho-L-threonyl-[protein] + H2O = L-threonyl-[protein] + phosphate. In Homo sapiens (Human), this protein is Protein phosphatase 1G (PPM1G).